Reading from the N-terminus, the 413-residue chain is Glucose-1-phosphate adenylyltransferase (413 aa).

Residues tyrosine 102, glycine 167, 182–183 (EK), and serine 200 each bind alpha-D-glucose 1-phosphate.

Belongs to the bacterial/plant glucose-1-phosphate adenylyltransferase family. As to quaternary structure, homotetramer.

The enzyme catalyses alpha-D-glucose 1-phosphate + ATP + H(+) = ADP-alpha-D-glucose + diphosphate. The protein operates within glycan biosynthesis; glycogen biosynthesis. In terms of biological role, involved in the biosynthesis of ADP-glucose, a building block required for the elongation reactions to produce glycogen. Catalyzes the reaction between ATP and alpha-D-glucose 1-phosphate (G1P) to produce pyrophosphate and ADP-Glc. This is Glucose-1-phosphate adenylyltransferase from Deinococcus radiodurans (strain ATCC 13939 / DSM 20539 / JCM 16871 / CCUG 27074 / LMG 4051 / NBRC 15346 / NCIMB 9279 / VKM B-1422 / R1).